A 445-amino-acid polypeptide reads, in one-letter code: tRNA-2-methylthio-N(6)-dimethylallyladenosine synthase (445 aa).

The MTTase N-terminal domain maps to 13–129; the sequence is KKLFIKTYGC…LPAMARAGRG (117 aa). [4Fe-4S] cluster is bound by residues C22, C58, C92, C163, C167, and C170. The 235-residue stretch at 149 to 383 folds into the Radical SAM core domain; sequence TRRAPAAFLT…LTSQQKAAQE (235 aa). The region spanning 383 to 445 is the TRAM domain; the sequence is EGMVGRELGV…PNSLAGVLAA (63 aa).

The protein belongs to the methylthiotransferase family. MiaB subfamily. As to quaternary structure, monomer. Requires [4Fe-4S] cluster as cofactor.

Its subcellular location is the cytoplasm. The enzyme catalyses N(6)-dimethylallyladenosine(37) in tRNA + (sulfur carrier)-SH + AH2 + 2 S-adenosyl-L-methionine = 2-methylsulfanyl-N(6)-dimethylallyladenosine(37) in tRNA + (sulfur carrier)-H + 5'-deoxyadenosine + L-methionine + A + S-adenosyl-L-homocysteine + 2 H(+). Its function is as follows. Catalyzes the methylthiolation of N6-(dimethylallyl)adenosine (i(6)A), leading to the formation of 2-methylthio-N6-(dimethylallyl)adenosine (ms(2)i(6)A) at position 37 in tRNAs that read codons beginning with uridine. The protein is tRNA-2-methylthio-N(6)-dimethylallyladenosine synthase of Paracoccus denitrificans (strain Pd 1222).